We begin with the raw amino-acid sequence, 156 residues long: uncharacterized protein (156 aa).

This is an uncharacterized protein from Aedes vexans (Inland floodwater mosquito).